The sequence spans 27 residues: Protamine-A (27 aa).

Residues 1–27 are disordered; that stretch reads ARRRRRHASTKLKRRRRRRRHGKKSHK.

As to expression, testis.

It localises to the nucleus. Its subcellular location is the chromosome. Functionally, protamines substitute for histones in the chromatin of sperm during the haploid phase of spermatogenesis. They compact sperm DNA into a highly condensed, stable and inactive complex. The polypeptide is Protamine-A (Acipenser stellatus (Sevruga)).